A 421-amino-acid polypeptide reads, in one-letter code: MADISLDELIRKRGAAAKGRLNARPGVGGVRSRVGIQQGLLSQSTRTATFQQRFDARQKIGLSDARLKLGVKDAREKLLQKDARFRIKGKVQDAREMLNSRKQQTTVPQKPRQVADAREKISLKRSSPAAFINPPIGTVTPALKLTKTIQVPQQKAMAPLHPHPAGMRINVVNNHQAKQNLYDLDEDDDGIASVPTKQMKFAASGGFLHHMAGLSSSKLSMSKALPLTKVVQNDAYTAPALPSSIRTKALTNMSRTLVNKEEPPKELPAAEPVLSPLEGTKMTVNNLHPRVTEEDIVELFCVCGALKRARLVHPGVAEVVFVKKDDAITAYKKYNNRCLDGQPMKCNLHMNGNVITSDQPILLRLSDSPSMKKESELPRRVNSASSSNPPAEVDPDTILKALFKSSGASVTTQPTEFKIKL.

An N-acetylalanine modification is found at Ala2. Ser5 carries the post-translational modification Phosphoserine. The residue at position 33 (Arg33) is an Omega-N-methylarginine. 2 positions are modified to phosphoserine: Ser44 and Ser127. Thr140 is subject to Phosphothreonine. Lys200 is covalently cross-linked (Glycyl lysine isopeptide (Lys-Gly) (interchain with G-Cter in SUMO2)). Phosphoserine occurs at positions 204, 215, and 217. Lys223 is covalently cross-linked (Glycyl lysine isopeptide (Lys-Gly) (interchain with G-Cter in SUMO2)). A Phosphoserine modification is found at Ser244. Lys248 participates in a covalent cross-link: Glycyl lysine isopeptide (Lys-Gly) (interchain with G-Cter in SUMO2). Ser275 bears the Phosphoserine mark. In terms of domain architecture, RRM spans Thr280–Asn351. The span at Ser370–Arg379 shows a compositional bias: basic and acidic residues. The disordered stretch occupies residues Ser370–Val393. A Glycyl lysine isopeptide (Lys-Gly) (interchain with G-Cter in SUMO2) cross-link involves residue Lys372. Phosphoserine; by RPS6KB1 is present on residues Ser383 and Ser385. Lys418 is covalently cross-linked (Glycyl lysine isopeptide (Lys-Gly) (interchain with G-Cter in SUMO2)).

In terms of assembly, interacts with POLD2. Interacts with NCBP1 and EIF4A3. Associates with the multiprotein exon junction complex (EJC). Interacts with RPS6KB1 (activated). Interacts with ERH. Interacts with THOC2, DDX39B and ZC3H11A; the interactions are ATP-dependent and indicative for an association with the TREX complex. Post-translationally, phosphorylated at Ser-383 and Ser-385 by RPS6KB1.

It localises to the nucleus. Its subcellular location is the nucleus speckle. The protein resides in the cytoplasm. Functionally, is involved in regulation of translation. Is preferentially associated with CBC-bound spliced mRNA-protein complexes during the pioneer round of mRNA translation. Contributes to enhanced translational efficiency of spliced over nonspliced mRNAs. Recruits activated ribosomal protein S6 kinase beta-1 I/RPS6KB1 to newly synthesized mRNA. Involved in nuclear mRNA export; probably mediated by association with the TREX complex. The sequence is that of Polymerase delta-interacting protein 3 (POLDIP3) from Homo sapiens (Human).